Here is a 163-residue protein sequence, read N- to C-terminus: MMFAYIVAVVSALALTSAYPTGAPSSTCVSMRPGHLADPQPLPAPYTISTPVNTMKAGDSIEVTISGNTPDDFFRGILLQARQGDNIVGKWTVKDDFSKLLDCGEPDNAVTHANSVDKTTVSYIWTAPEDFVGDVVFLVTIVKVYETFWVAIPSAPVTVLSHK.

An N-terminal signal peptide occupies residues 1 to 18; that stretch reads MMFAYIVAVVSALALTSA. The region spanning 19–163 is the Reelin domain; sequence YPTGAPSSTC…SAPVTVLSHK (145 aa). A disulfide bridge links Cys-28 with Cys-103.

This sequence belongs to the insect defense protein family.

Its subcellular location is the secreted. In terms of biological role, may have antimicrobial activity. This chain is Putative defense protein 3, found in Antheraea mylitta (Tasar silkworm).